A 950-amino-acid polypeptide reads, in one-letter code: Leucine--tRNA ligase (950 aa).

The short motif at 41–52 (PYPSGDGLHVGH) is the 'HIGH' region element. A 'KMSKS' region motif is present at residues 718 to 722 (KMSKS). Lysine 721 is a binding site for ATP.

Belongs to the class-I aminoacyl-tRNA synthetase family.

The protein resides in the cytoplasm. The catalysed reaction is tRNA(Leu) + L-leucine + ATP = L-leucyl-tRNA(Leu) + AMP + diphosphate. The polypeptide is Leucine--tRNA ligase (Rhodopirellula baltica (strain DSM 10527 / NCIMB 13988 / SH1)).